The chain runs to 254 residues: Alcohol dehydrogenase 1 (254 aa).

Phenylalanine 10 to leucine 33 contributes to the NAD(+) binding site. Serine 138 serves as a coordination point for substrate. The Proton acceptor role is filled by tyrosine 151.

Belongs to the short-chain dehydrogenases/reductases (SDR) family. In terms of assembly, homodimer.

The enzyme catalyses a primary alcohol + NAD(+) = an aldehyde + NADH + H(+). It catalyses the reaction a secondary alcohol + NAD(+) = a ketone + NADH + H(+). This is Alcohol dehydrogenase 1 (Adh1) from Drosophila navojoa (Fruit fly).